The sequence spans 157 residues: MAGTIEVLIPGGEANPGPPLGPELGPTPVDVQDVVQTINDETDAFDGMEVPVTVEYEDTGDFSISVGVPPTAELIKDEAGFESGSGEPQENFVANMSVDQVQKIAEQKSSDLLSYDTFNAAKEVVGTCTSLGVTIDGNNPREFKSRMEDGEYDDILK.

Disordered stretches follow at residues 1-28 (MAGT…GPTP) and 138-157 (NNPR…DILK). Positions 139 to 157 (NPREFKSRMEDGEYDDILK) are enriched in basic and acidic residues.

Belongs to the universal ribosomal protein uL11 family. As to quaternary structure, part of the ribosomal stalk of the 50S ribosomal subunit. Interacts with L10 and the large rRNA to form the base of the stalk. L10 forms an elongated spine to which L12 dimers bind in a sequential fashion forming a multimeric L10(L12)X complex.

Forms part of the ribosomal stalk which helps the ribosome interact with GTP-bound translation factors. The polypeptide is Large ribosomal subunit protein uL11 (Haloquadratum walsbyi (strain DSM 16790 / HBSQ001)).